A 487-amino-acid polypeptide reads, in one-letter code: 2-aminomuconic semialdehyde dehydrogenase (487 aa).

231–236 (GSQPTA) contacts NAD(+). Glu253 functions as the Proton acceptor in the catalytic mechanism. Residue Cys287 is the Nucleophile of the active site. Position 362 is a phosphoserine (Ser362).

The protein belongs to the aldehyde dehydrogenase family. Detected in hepatocytes and in proximal and distal convoluted tubules in kidney cortex (at protein level). Highly expressed in adult liver and in kidney cortex. First detected in embryonic liver after 15 days of development.

Its subcellular location is the cytoplasm. The enzyme catalyses 2-aminomuconate 6-semialdehyde + NAD(+) + H2O = (2Z,4E)-2-aminomuconate + NADH + 2 H(+). It functions in the pathway amino-acid degradation; L-kynurenine degradation. Catalyzes the NAD-dependent oxidation of 2-aminomuconic semialdehyde of the kynurenine metabolic pathway in L-tryptophan degradation. This is 2-aminomuconic semialdehyde dehydrogenase (Aldh8a1) from Mus musculus (Mouse).